Reading from the N-terminus, the 157-residue chain is Small ribosomal subunit protein uS7 (157 aa).

This sequence belongs to the universal ribosomal protein uS7 family. Part of the 30S ribosomal subunit. Contacts proteins S9 and S11.

One of the primary rRNA binding proteins, it binds directly to 16S rRNA where it nucleates assembly of the head domain of the 30S subunit. Is located at the subunit interface close to the decoding center, probably blocks exit of the E-site tRNA. This Paracidovorax citrulli (strain AAC00-1) (Acidovorax citrulli) protein is Small ribosomal subunit protein uS7.